Consider the following 145-residue polypeptide: Oleosin L (145 aa).

N-acetylalanine is present on Ala2. The next 2 membrane-spanning stretches (helical) occupy residues 36-56 (GSLL…LTIA) and 59-79 (LLVI…LLGA). The short motif at 58-69 (PLLVIFSPVLVP) is the Proline-knot element. Over residues 123 to 132 (KAREMKDRAE) the composition is skewed to basic and acidic residues. The segment at 123–145 (KAREMKDRAEQFSQQPVAGSQTS) is disordered. The segment covering 133-145 (QFSQQPVAGSQTS) has biased composition (polar residues).

Belongs to the oleosin family. Expressed in seeds (at protein level).

The protein resides in the lipid droplet. It localises to the membrane. May have a structural role to stabilize the lipid body during desiccation of the seed by preventing coalescence of the oil. Probably interacts with both lipid and phospholipid moieties of lipid bodies. May also provide recognition signals for specific lipase anchorage in lipolysis during seedling growth. This is Oleosin L from Sesamum indicum (Oriental sesame).